A 322-amino-acid polypeptide reads, in one-letter code: Lipoyl synthase (322 aa).

7 residues coordinate [4Fe-4S] cluster: Cys-61, Cys-66, Cys-72, Cys-87, Cys-91, Cys-94, and Ser-300. In terms of domain architecture, Radical SAM core spans 73–289; that stretch reads WDKKHATFMI…ETVAYTKGFL (217 aa).

Belongs to the radical SAM superfamily. Lipoyl synthase family. Requires [4Fe-4S] cluster as cofactor.

It localises to the cytoplasm. The enzyme catalyses [[Fe-S] cluster scaffold protein carrying a second [4Fe-4S](2+) cluster] + N(6)-octanoyl-L-lysyl-[protein] + 2 oxidized [2Fe-2S]-[ferredoxin] + 2 S-adenosyl-L-methionine + 4 H(+) = [[Fe-S] cluster scaffold protein] + N(6)-[(R)-dihydrolipoyl]-L-lysyl-[protein] + 4 Fe(3+) + 2 hydrogen sulfide + 2 5'-deoxyadenosine + 2 L-methionine + 2 reduced [2Fe-2S]-[ferredoxin]. The protein operates within protein modification; protein lipoylation via endogenous pathway; protein N(6)-(lipoyl)lysine from octanoyl-[acyl-carrier-protein]: step 2/2. In terms of biological role, catalyzes the radical-mediated insertion of two sulfur atoms into the C-6 and C-8 positions of the octanoyl moiety bound to the lipoyl domains of lipoate-dependent enzymes, thereby converting the octanoylated domains into lipoylated derivatives. This chain is Lipoyl synthase, found in Rhizobium meliloti (strain 1021) (Ensifer meliloti).